Here is a 212-residue protein sequence, read N- to C-terminus: Thymidylate kinase (212 aa).

10–17 serves as a coordination point for ATP; sequence GIDGCGKT.

This sequence belongs to the thymidylate kinase family.

The catalysed reaction is dTMP + ATP = dTDP + ADP. Phosphorylation of dTMP to form dTDP in both de novo and salvage pathways of dTTP synthesis. This is Thymidylate kinase from Synechococcus sp. (strain RCC307).